Reading from the N-terminus, the 231-residue chain is Homeobox protein EMX1 (231 aa).

Positions 133-192 (PKRIRTAFSPSQLLRLERAFEKNHYVVGAERKQLANSLSLSETQVKVWFQNRRTKYKRQK) form a DNA-binding region, homeobox. Residues 193-231 (LEEEGPECTQKKKGNHHINRWRIATKQTGSEDIDVMSDA) form a disordered region. A compositionally biased stretch (basic residues) spans 203–212 (KKKGNHHINR).

This sequence belongs to the EMX homeobox family.

Its subcellular location is the nucleus. In terms of biological role, may function in combinations with OTX1/2 to specify cell fates in the developing central nervous system. This chain is Homeobox protein EMX1 (emx1), found in Danio rerio (Zebrafish).